The following is a 183-amino-acid chain: uncharacterized protein (183 aa).

It to A.muscaria DOPA 4,5-dioxygenase.

This is an uncharacterized protein from Botryotinia fuckeliana (Noble rot fungus).